We begin with the raw amino-acid sequence, 254 residues long: Ribosomal RNA small subunit methyltransferase G (254 aa).

The tract at residues 1–21 (MPEGDGVPRETPSPSVVPESP) is disordered. Residues 9-21 (RETPSPSVVPESP) are compositionally biased toward low complexity. S-adenosyl-L-methionine contacts are provided by residues Gly-90, Leu-95, 142 to 143 (AE), and Arg-157. Residues 230–254 (GPLRAATAPAPPGAAKRRPGKGNRR) are disordered. A compositionally biased stretch (basic residues) spans 244-254 (AKRRPGKGNRR).

This sequence belongs to the methyltransferase superfamily. RNA methyltransferase RsmG family.

Its subcellular location is the cytoplasm. In terms of biological role, specifically methylates the N7 position of guanine in position 518 of 16S rRNA. The chain is Ribosomal RNA small subunit methyltransferase G from Kineococcus radiotolerans (strain ATCC BAA-149 / DSM 14245 / SRS30216).